The following is a 1590-amino-acid chain: Pentafunctional AROM polypeptide (1590 aa).

The 3-dehydroquinate synthase stretch occupies residues 1–387; sequence MGSTTFENPT…YEPKASVVED (387 aa). NAD(+) is bound by residues 49–51, 86–89, 117–119, and Asp-122; these read DTN, ENSK, and GGV. Arg-133 serves as a coordination point for 7-phospho-2-dehydro-3-deoxy-D-arabino-heptonate. Residue 142 to 143 participates in NAD(+) binding; that stretch reads TT. Residues Asp-149 and Lys-155 each contribute to the 7-phospho-2-dehydro-3-deoxy-D-arabino-heptonate site. Lys-164 contacts NAD(+). Asn-165 contacts 7-phospho-2-dehydro-3-deoxy-D-arabino-heptonate. Residues 182–185 and Asn-193 each bind NAD(+); that span reads FLET. Position 197 (Glu-197) interacts with Zn(2+). 7-phospho-2-dehydro-3-deoxy-D-arabino-heptonate contacts are provided by residues 197–200 and Lys-253; that span reads EVVK. The active-site Proton acceptor; for 3-dehydroquinate synthase activity is Glu-263. Residues 267 to 271 and His-274 contribute to the 7-phospho-2-dehydro-3-deoxy-D-arabino-heptonate site; that span reads RNILN. His-274 contributes to the Zn(2+) binding site. His-278 (proton acceptor; for 3-dehydroquinate synthase activity) is an active-site residue. Residues His-290 and Lys-359 each coordinate 7-phospho-2-dehydro-3-deoxy-D-arabino-heptonate. Position 290 (His-290) interacts with Zn(2+). The EPSP synthase stretch occupies residues 400 to 841; sequence VRPSVPETLN…WDILSKSFQV (442 aa). Cys-823 serves as the catalytic For EPSP synthase activity. The shikimate kinase stretch occupies residues 863-1055; that stretch reads DKSIFIIGMR…RNKPQSFFVS (193 aa). Residue 870–877 participates in ATP binding; that stretch reads GMRGAGKT. Residues 1056–1276 are 3-dehydroquinase; that stretch reads LTMPDISGAA…AAPGQLSAAE (221 aa). Catalysis depends on His-1179, which acts as the Proton acceptor; for 3-dehydroquinate dehydratase activity. Lys-1207 functions as the Schiff-base intermediate with substrate; for 3-dehydroquinate dehydratase activity in the catalytic mechanism. The tract at residues 1289-1590 is shikimate dehydrogenase; it reads PKSFYLFGTP…KMDKHPTFVC (302 aa).

This sequence in the N-terminal section; belongs to the sugar phosphate cyclases superfamily. Dehydroquinate synthase family. It in the 2nd section; belongs to the EPSP synthase family. The protein in the 3rd section; belongs to the shikimate kinase family. In the 4th section; belongs to the type-I 3-dehydroquinase family. This sequence in the C-terminal section; belongs to the shikimate dehydrogenase family. Homodimer. Requires Zn(2+) as cofactor.

It is found in the cytoplasm. The enzyme catalyses 7-phospho-2-dehydro-3-deoxy-D-arabino-heptonate = 3-dehydroquinate + phosphate. It catalyses the reaction 3-dehydroquinate = 3-dehydroshikimate + H2O. The catalysed reaction is shikimate + NADP(+) = 3-dehydroshikimate + NADPH + H(+). It carries out the reaction shikimate + ATP = 3-phosphoshikimate + ADP + H(+). The enzyme catalyses 3-phosphoshikimate + phosphoenolpyruvate = 5-O-(1-carboxyvinyl)-3-phosphoshikimate + phosphate. It functions in the pathway metabolic intermediate biosynthesis; chorismate biosynthesis; chorismate from D-erythrose 4-phosphate and phosphoenolpyruvate: step 2/7. It participates in metabolic intermediate biosynthesis; chorismate biosynthesis; chorismate from D-erythrose 4-phosphate and phosphoenolpyruvate: step 3/7. The protein operates within metabolic intermediate biosynthesis; chorismate biosynthesis; chorismate from D-erythrose 4-phosphate and phosphoenolpyruvate: step 4/7. Its pathway is metabolic intermediate biosynthesis; chorismate biosynthesis; chorismate from D-erythrose 4-phosphate and phosphoenolpyruvate: step 5/7. It functions in the pathway metabolic intermediate biosynthesis; chorismate biosynthesis; chorismate from D-erythrose 4-phosphate and phosphoenolpyruvate: step 6/7. Functionally, the AROM polypeptide catalyzes 5 consecutive enzymatic reactions in prechorismate polyaromatic amino acid biosynthesis. The sequence is that of Pentafunctional AROM polypeptide from Sclerotinia sclerotiorum (White mold).